Here is a 426-residue protein sequence, read N- to C-terminus: Histidine--tRNA ligase (426 aa).

The protein belongs to the class-II aminoacyl-tRNA synthetase family. Homodimer.

It is found in the cytoplasm. The catalysed reaction is tRNA(His) + L-histidine + ATP = L-histidyl-tRNA(His) + AMP + diphosphate + H(+). The chain is Histidine--tRNA ligase from Prochlorococcus marinus (strain AS9601).